The sequence spans 172 residues: uncharacterized protein (172 aa).

Positions 1 to 29 (MKKKQVMLALTAAAGLGLTALHSAPAAKA) are cleaved as a signal peptide. SH3b domains are found at residues 42–105 (SDTY…MKTA) and 112–172 (KQTA…LQMR).

This is an uncharacterized protein from Bacillus subtilis (strain 168).